We begin with the raw amino-acid sequence, 280 residues long: Protease HtpX (280 aa).

2 helical membrane-spanning segments follow: residues 7–26 (TFIL…GLLG) and 30–49 (GMLV…YWYS). Residue His-129 coordinates Zn(2+). Glu-130 is an active-site residue. Residue His-133 participates in Zn(2+) binding. Transmembrane regions (helical) follow at residues 146–166 (ATIA…SMFG) and 178–198 (VVGM…QMAI). Position 203 (Glu-203) interacts with Zn(2+).

Belongs to the peptidase M48B family. Zn(2+) is required as a cofactor.

It is found in the cell inner membrane. In Legionella pneumophila (strain Corby), this protein is Protease HtpX.